Reading from the N-terminus, the 862-residue chain is MQPTAEQFTEQAWAAIVAAQQLAQASRHQQLETEHLLLALLRQNGLAGRILSKTGVDVTTFEASVEGHLQRLPSLGSAPDSVFLGRSLNKALDRAEQRRDGFGDSFIAIEHLLLALAEDDRCGRQLLSQAGVTTNTLKEAITAVRGNQTVTDQNPEATYESLAKYGRDLTAAARDGQLDPVIGRDEEIRRTIQILSRRTKNNPVLIGEPGVGKTAIVEGLAQRIVNGDVPQALQNRQLITLDMGALIAGAKYRGEFEERLKAVLKEVTTSDGQIVLFIDEIHTVVGAGASGGAMDASNLLKPMLARGELRCIGATTLDEHRQHIEKDPALERRFQQVLVDQPTVPDTISILRGLKERYEVHHGVRIADSALVAAAMLSSRYITDRFLPDKAIDLVDESAARLKMEITSKPEQIDEIDRKILQLEMEKLSLGRESDSASQERLQRIERELAELGEQQSSLNAQWQSEKGAIDQLSALKEEIERVQLQVEQAKRNYDLNKAAELEYGTLATLQRQLQEQEDLLEDEDGTDKTLLREEVTEDDIAEVIAKWTGIPVARLVQSEMEKLLQLEDDLHQRVIGQNQAVTAVADAIQRSRAGLSDPNRPIASFLFLGPTGVGKTELSKALANRLFDSDDAMVRIDMSEYMEKHTVSRLIGAPPGYVGYEAGGQLTEAVRRRPYAVILFDEVEKAHPDVFNVMLQILDDGRVTDGQGRTVDFTNTVLILTSNIGSQSILELAGDPEQHTAMEQRVNEALKAKFRPEFLNRLDDQIIFRSLEKEELRRIVSLQVERLRSRLEQRKLDLQLSDIAADWLATIGFDPVYGARPLKRAIQRELETPIAKAILAGQLSEGQTVQVDAGDDKLSIS.

A Clp R domain is found at 5–147 (AEQFTEQAWA…KEAITAVRGN (143 aa)). Repeat regions lie at residues 8 to 72 (FTEQ…LQRL) and 84 to 147 (LGRS…VRGN). Positions 160–341 (ESLAKYGRDL…RRFQQVLVDQ (182 aa)) are NBD1. ATP is bound at residue 207–214 (GEPGVGKT). Residues 342–550 (PTVPDTISIL…IAEVIAKWTG (209 aa)) are linker. Residues 392-526 (IDLVDESAAR…QEDLLEDEDG (135 aa)) are a coiled coil. The NBD2 stretch occupies residues 560–771 (EMEKLLQLED…RLDDQIIFRS (212 aa)). 610–617 (GPTGVGKT) contributes to the ATP binding site. Positions 772-862 (LEKEELRRIV…DAGDDKLSIS (91 aa)) are C-terminal.

The protein belongs to the ClpA/ClpB family. Homohexamer. The oligomerization is ATP-dependent.

It is found in the cytoplasm. Its function is as follows. Part of a stress-induced multi-chaperone system, it is involved in the recovery of the cell from heat-induced damage, in cooperation with DnaK, DnaJ and GrpE. Acts before DnaK, in the processing of protein aggregates. Protein binding stimulates the ATPase activity; ATP hydrolysis unfolds the denatured protein aggregates, which probably helps expose new hydrophobic binding sites on the surface of ClpB-bound aggregates, contributing to the solubilization and refolding of denatured protein aggregates by DnaK. This chain is Chaperone protein ClpB 1 (clpB1), found in Parasynechococcus marenigrum (strain WH8102).